The sequence spans 214 residues: Insulin-like growth factor 2 (214 aa).

Residues 48 to 79 (EVASAETLCGGELVDALQFVCEDRGFYFSRPT) are b. Intrachain disulfides connect C56-C97, C68-C110, and C96-C101. Residues 80-90 (SRSNSRRSQNR) are c. The interval 91–111 (GIVEECCFRSCDLNLLEQYCA) is a. The interval 112-117 (KPAKSE) is d. The propeptide at 118-214 (RDVSATSLQI…PPTDNYVSHN (97 aa)) is e peptide.

This sequence belongs to the insulin family.

The protein localises to the secreted. The insulin-like growth factors, isolated from plasma, are structurally and functionally related to insulin but have a much higher growth-promoting activity. Acts as a ligand for integrin which is required for IGF2 signaling. The chain is Insulin-like growth factor 2 from Oncorhynchus mykiss (Rainbow trout).